The primary structure comprises 178 residues: Alkyl hydroperoxide reductase AhpD (178 aa).

Cys130 (proton donor) is an active-site residue. Cys130 and Cys133 are disulfide-bonded. Residue Cys133 is the Cysteine sulfenic acid (-SOH) intermediate of the active site.

The protein belongs to the AhpD family. As to quaternary structure, homotrimer.

It carries out the reaction N(6)-[(R)-dihydrolipoyl]-L-lysyl-[lipoyl-carrier protein] + a hydroperoxide = N(6)-[(R)-lipoyl]-L-lysyl-[lipoyl-carrier protein] + an alcohol + H2O. Its function is as follows. Antioxidant protein with alkyl hydroperoxidase activity. Required for the reduction of the AhpC active site cysteine residues and for the regeneration of the AhpC enzyme activity. In Mycolicibacterium paratuberculosis (strain ATCC BAA-968 / K-10) (Mycobacterium paratuberculosis), this protein is Alkyl hydroperoxide reductase AhpD.